A 310-amino-acid polypeptide reads, in one-letter code: Methionyl-tRNA formyltransferase (310 aa).

109–112 (SLLP) contributes to the (6S)-5,6,7,8-tetrahydrofolate binding site.

It belongs to the Fmt family.

The catalysed reaction is L-methionyl-tRNA(fMet) + (6R)-10-formyltetrahydrofolate = N-formyl-L-methionyl-tRNA(fMet) + (6S)-5,6,7,8-tetrahydrofolate + H(+). Its function is as follows. Attaches a formyl group to the free amino group of methionyl-tRNA(fMet). The formyl group appears to play a dual role in the initiator identity of N-formylmethionyl-tRNA by promoting its recognition by IF2 and preventing the misappropriation of this tRNA by the elongation apparatus. The sequence is that of Methionyl-tRNA formyltransferase from Staphylococcus epidermidis (strain ATCC 12228 / FDA PCI 1200).